The following is a 47-amino-acid chain: Type II secretion system protein N (47 aa).

The protein belongs to the GSP N family.

It localises to the cell inner membrane. Involved in a type II secretion system (T2SS, formerly general secretion pathway, GSP) for the export of proteins. The protein is Type II secretion system protein N (exeN) of Aeromonas salmonicida.